A 425-amino-acid polypeptide reads, in one-letter code: Histone-binding protein RBBP7 (425 aa).

Alanine 2 is subject to N-acetylalanine. Residue serine 3 is modified to Phosphoserine. Lysine 4 carries the N6-acetyllysine; alternate modification. Residue lysine 4 forms a Glycyl lysine isopeptide (Lys-Gly) (interchain with G-Cter in SUMO2); alternate linkage. A Glycyl lysine isopeptide (Lys-Gly) (interchain with G-Cter in ubiquitin); alternate cross-link involves residue lysine 4. The residue at position 10 (threonine 10) is a Phosphothreonine. Glutamate 13 and serine 95 each carry phosphoserine. 7 WD repeats span residues 47 to 122 (QWLP…KINH), 128 to 173 (RARY…LRLR), 181 to 217 (GLSWNSNLSGHLLSASDDHTVCLWDINAGPKEGKIVD), 228 to 269 (VVED…HLVD), 275 to 312 (VNCLSFNPYSEFILATGSADKTVALWDLRNLKLKLHTF), 318 to 369 (EIFQ…LFIH), and 376 to 403 (ISDFSWNPNEPWVICSVSEDNIMQIWQM). Lysine 101 is covalently cross-linked (Glycyl lysine isopeptide (Lys-Gly) (interchain with G-Cter in SUMO2)). Residue lysine 119 is modified to N6-acetyllysine. Lysine 155 is covalently cross-linked (Glycyl lysine isopeptide (Lys-Gly) (interchain with G-Cter in SUMO2)). The residue at position 159 (lysine 159) is an N6-acetyllysine; alternate. Lysine 159 participates in a covalent cross-link: Glycyl lysine isopeptide (Lys-Gly) (interchain with G-Cter in SUMO2); alternate. Serine 354 is subject to Phosphoserine.

The protein belongs to the WD repeat RBAP46/RBAP48/MSI1 family. As to quaternary structure, binds directly to helix 1 of the histone fold of histone H4, a region that is not accessible when H4 is in chromatin. Subunit of the type B histone acetyltransferase (HAT) complex, composed of RBBP7 and HAT1. Subunit of the core histone deacetylase (HDAC) complex, which is composed of HDAC1, HDAC2, RBBP4 and RBBP7. The core HDAC complex associates with SIN3A, ARID4B/SAP180, SAP18, SAP30, SAP130, SUDS3/SAP45 and possibly ARID4A/RBP1 and ING1 to form the SIN3 HDAC complex. Component of the nucleosome remodeling and deacetylase (NuRD) repressor complex, composed of core proteins MTA1, MTA2, MTA3, RBBP4, RBBP7, HDAC1, HDAC2, MBD2, MBD3, and peripherally associated proteins CDK2AP1, CDK2AP2, GATAD2A, GATAD2B, CHD3, CHD4 and CHD5. The exact stoichiometry of the NuRD complex is unknown, and some subunits such as MBD2 and MBD3, GATAD2A and GATAD2B, and CHD3, CHD4 and CHD5 define mutually exclusive NuRD complexes. The NuRD complex may interact with MBD3L1. The NuRD complex may interact with MBD3L2. Subunit of the PRC2/EED-EZH2 complex, which is composed of at least EED, EZH2, RBBP4, RBBP7 and SUZ12. The PRC2/EED-EZH2 complex may also associate with HDAC1. Component of the NURF-1 ISWI chromatin remodeling complex (also called the nucleosome-remodeling factor (NURF) complex) at least composed of SMARCA1 (isoform 2), BPTF, RBBP4 and RBBP7. Within the complex interacts with isoform 2 of SMARCA1. Component of the BPFT-SMARCA1 complex at least composed of SMARCA1 (isoform 1), BPFT, RBBP4 and RBBP7; the complex is catalytically inactive and does not remodel chromatin. Within the complex interacts with isoform 1 of SMARCA1. Interacts with BRCA1. Interacts with CDK2AP1. Interacts with CENPA. Interacts with CHD3. Interacts with CHD4. Interacts with CREBBP, and this interaction may be enhanced by the binding of phosphorylated CREB1 to CREBBP. Interacts with HDAC7. Interacts with MTA1. Interacts with PWWP2B. Interacts with RB1 (via viral protein-binding domain). Interacts with SUV39H1.

It is found in the nucleus. Core histone-binding subunit that may target chromatin remodeling factors, histone acetyltransferases and histone deacetylases to their histone substrates in a manner that is regulated by nucleosomal DNA. Component of several complexes which regulate chromatin metabolism. These include the type B histone acetyltransferase (HAT) complex, which is required for chromatin assembly following DNA replication; the core histone deacetylase (HDAC) complex, which promotes histone deacetylation and consequent transcriptional repression; the nucleosome remodeling and histone deacetylase complex (the NuRD complex), which promotes transcriptional repression by histone deacetylation and nucleosome remodeling; and the PRC2/EED-EZH2 complex, which promotes repression of homeotic genes during development; and the NURF (nucleosome remodeling factor) complex. This Homo sapiens (Human) protein is Histone-binding protein RBBP7 (RBBP7).